A 163-amino-acid polypeptide reads, in one-letter code: Nucleotide-binding protein LBJ_2391 (163 aa).

This sequence belongs to the YajQ family.

Nucleotide-binding protein. This chain is Nucleotide-binding protein LBJ_2391, found in Leptospira borgpetersenii serovar Hardjo-bovis (strain JB197).